The following is a 442-amino-acid chain: Pentatricopeptide repeat-containing protein At2g27800, mitochondrial (442 aa).

The transit peptide at 1 to 67 (MSATRSTFLG…SFLPSIHVRF (67 aa)) directs the protein to the mitochondrion. 6 PPR repeats span residues 206 to 236 (NENL…MVTS), 244 to 286 (TIRT…GIEP), 287 to 322 (DVFA…DCEP), 323 to 357 (NSFT…GFVP), 358 to 392 (NGKS…GRVV), and 393 to 427 (DFIS…QLVD).

It belongs to the PPR family. P subfamily.

Its subcellular location is the mitochondrion. The sequence is that of Pentatricopeptide repeat-containing protein At2g27800, mitochondrial from Arabidopsis thaliana (Mouse-ear cress).